The following is a 504-amino-acid chain: Maturase K (504 aa).

The protein belongs to the intron maturase 2 family. MatK subfamily.

Its subcellular location is the plastid. It is found in the chloroplast. Its function is as follows. Usually encoded in the trnK tRNA gene intron. Probably assists in splicing its own and other chloroplast group II introns. The sequence is that of Maturase K from Quercus cerris (Turkey oak).